The sequence spans 333 residues: PDZ domain-containing protein GIPC1 (333 aa).

Basic residues predominate over residues 1-11; the sequence is MPLGLGRRKKA. Positions 1–53 are disordered; sequence MPLGLGRRKKAPPLVENEEAEPSRSGLGVGEPGPLGGSAAGESQMGLPPPPAA. Residues 27–39 show a composition bias toward gly residues; the sequence is LGVGEPGPLGGSA. Ser-68 is subject to Phosphoserine. The region spanning 133–213 is the PDZ domain; that stretch reads EVEVFKSEEA…GRTFTLKLTE (81 aa). Phosphoserine is present on residues Ser-222, Ser-225, and Ser-232. Residues 223-244 form a disordered region; sequence QRSAGGHPGSGPQLGTGRGTLR. Residues 228–240 are compositionally biased toward gly residues; the sequence is GHPGSGPQLGTGR. Thr-242 carries the phosphothreonine modification. Ser-247 is subject to Phosphoserine.

The protein belongs to the GIPC family. Interacts with GLUT1 (C-terminus), ACTN1, KIF1B, MYO6 and PLEKHG5. Interacts with RGS19 C-terminus. Interacts with SDC4/syndecan-4 and SEMA4C/semaphorin-4C. As to expression, widely expressed.

It localises to the cytoplasm. The protein localises to the membrane. Its function is as follows. Inhibits endothelial cell migration (in vitro). May be involved in G protein-linked signaling. The sequence is that of PDZ domain-containing protein GIPC1 (Gipc1) from Mus musculus (Mouse).